Here is a 125-residue protein sequence, read N- to C-terminus: Ribonuclease P protein component 1 (125 aa).

Positions 1–13 (MRRNGKEGKDRAP) are enriched in basic and acidic residues. Residues 1-24 (MRRNGKEGKDRAPGRPQRKGQEVA) are disordered.

It belongs to the eukaryotic/archaeal RNase P protein component 1 family. Consists of a catalytic RNA component and at least 4-5 protein subunits.

It is found in the cytoplasm. The catalysed reaction is Endonucleolytic cleavage of RNA, removing 5'-extranucleotides from tRNA precursor.. Part of ribonuclease P, a protein complex that generates mature tRNA molecules by cleaving their 5'-ends. This is Ribonuclease P protein component 1 from Thermococcus onnurineus (strain NA1).